Here is a 363-residue protein sequence, read N- to C-terminus: D(1) dopamine receptor (363 aa).

The Extracellular segment spans residues 1–24 (MAVLDLNLTTVIDSGFMESDRSVR). The N-linked (GlcNAc...) asparagine glycan is linked to asparagine 7. Residues 25 to 45 (VLTGCFLSVLILSTLLGNTLV) form a helical membrane-spanning segment. Residues 46 to 61 (CAAVTKFRHLRSKVTN) are Cytoplasmic-facing. The chain crosses the membrane as a helical span at residues 62–81 (FFVISLAVSDLLVAVLVMPW). The Extracellular portion of the chain corresponds to 82–98 (KAVTEVAGFWPFGAFCD). The cysteines at positions 97 and 187 are disulfide-linked. Residues 99-120 (IWVAFDIMCSTASILNLCVISV) form a helical membrane-spanning segment. Topologically, residues 121-139 (DRYWAISSPFRYERKMTPR) are cytoplasmic. A helical transmembrane segment spans residues 140–164 (VAFVMISGAWTLSVLISFIPVQLKW). Over 165–194 (HKAQPIGFLEVNASRRDLPTDNCDSSLNRT) the chain is Extracellular. A helical transmembrane segment spans residues 195-219 (YAISSSLISFYIPVAIMIVTYTQIY). The Cytoplasmic portion of the chain corresponds to 220-271 (RIAQKQIRRISALERAAESAQIRHDSMGSGSNMDLESSFKLSFKRETKVLKT). The helical transmembrane segment at 272–297 (LSVIMGVFVCCWLPFFILNCMVPFCK) threads the bilayer. Over 298–310 (RTSNGLPCISPTT) the chain is Extracellular. Residues 311–330 (FDVFVWFGWANSSLNPIIYA) traverse the membrane as a helical segment. Residues 331–363 (FNADFRRAFAILLGCQRLCPGSISMETPSLNKN) are Cytoplasmic-facing. A lipid anchor (S-palmitoyl cysteine) is attached at cysteine 345.

It belongs to the G-protein coupled receptor 1 family. As to expression, retina.

The protein resides in the cell membrane. Its subcellular location is the cell projection. It is found in the cilium membrane. Dopamine receptor whose activity is mediated by G proteins which activate adenylyl cyclase. Could be involved in growth hormone release. This Carassius auratus (Goldfish) protein is D(1) dopamine receptor.